A 28-amino-acid polypeptide reads, in one-letter code: trp operon leader peptide (28 aa).

Functionally, this protein is involved in control of the biosynthesis of tryptophan. The chain is trp operon leader peptide (trpL) from Serratia marcescens.